The sequence spans 217 residues: ATP-dependent Clp protease proteolytic subunit (217 aa).

Ser-120 functions as the Nucleophile in the catalytic mechanism. His-145 is a catalytic residue.

It belongs to the peptidase S14 family. In terms of assembly, fourteen ClpP subunits assemble into 2 heptameric rings which stack back to back to give a disk-like structure with a central cavity, resembling the structure of eukaryotic proteasomes.

Its subcellular location is the cytoplasm. It catalyses the reaction Hydrolysis of proteins to small peptides in the presence of ATP and magnesium. alpha-casein is the usual test substrate. In the absence of ATP, only oligopeptides shorter than five residues are hydrolyzed (such as succinyl-Leu-Tyr-|-NHMec, and Leu-Tyr-Leu-|-Tyr-Trp, in which cleavage of the -Tyr-|-Leu- and -Tyr-|-Trp bonds also occurs).. Cleaves peptides in various proteins in a process that requires ATP hydrolysis. Has a chymotrypsin-like activity. Plays a major role in the degradation of misfolded proteins. In Ralstonia nicotianae (strain ATCC BAA-1114 / GMI1000) (Ralstonia solanacearum), this protein is ATP-dependent Clp protease proteolytic subunit.